The primary structure comprises 203 residues: SOSS complex subunit B1-A (203 aa).

The segment at residues Ile22–Leu92 is a DNA-binding region (OB). The segment at Glu110 to Arg203 is disordered. Over residues Gln118–Ser140 the composition is skewed to low complexity. The span at Glu149–His182 shows a compositional bias: polar residues.

The protein belongs to the SOSS-B family. SOSS-B1 subfamily. Component of the SOSS complex, composed of soss-b (soss-b1/nabp2 or soss-b2/nabp1), soss-a/ints3 and soss-c/inip. SOSS complexes containing soss-b1/nabp2 are more abundant than complexes containing soss-b2/nabp1.

Its subcellular location is the nucleus. Its function is as follows. Component of the SOSS complex, a multiprotein complex that functions downstream of the MRN complex to promote DNA repair and G2/M checkpoint. In the SOSS complex, acts as a sensor of single-stranded DNA that binds to single-stranded DNA. The SOSS complex associates with DNA lesions and influences diverse endpoints in the cellular DNA damage response including cell-cycle checkpoint activation, recombinational repair and maintenance of genomic stability. Required for efficient homologous recombination-dependent repair of double-strand breaks (DSBs). This Xenopus laevis (African clawed frog) protein is SOSS complex subunit B1-A (nabp2-a).